Here is a 124-residue protein sequence, read N- to C-terminus: Cytochrome c2 (124 aa).

Glutamine 1 carries the post-translational modification Pyrrolidone carboxylic acid. The heme c site is built by cysteine 16, cysteine 19, histidine 20, and methionine 85.

This sequence belongs to the cytochrome c family. In terms of processing, binds 1 heme c group covalently per subunit.

It is found in the periplasm. Cytochrome c2 is found mainly in purple, non-sulfur, photosynthetic bacteria where it functions as the electron donor to the oxidized bacteriochlorophyll in the photophosphorylation pathway. However, it may also have a role in the respiratory chain and is found in some non-photosynthetic bacteria. In Afifella marina (Rhodobium marinum), this protein is Cytochrome c2.